We begin with the raw amino-acid sequence, 235 residues long: Eukaryotic translation initiation factor 4E-1 (235 aa).

Residues 16–25 show a composition bias toward basic and acidic residues; the sequence is VNKHRGVRSD. Positions 16 to 56 are disordered; the sequence is VNKHRGVRSDGEEDEQLEEGEIVGGDADTLSSSSSSRPGTA. Over residues 26 to 36 the composition is skewed to acidic residues; that stretch reads GEEDEQLEEGE. 2 EIF4G-binding regions span residues 60–63 and 70–106; these read HPLE and FDTP…NNIH. MRNA contacts are provided by residues 78-83, Lys110, and 128-129; these read KQVAWG and WE. A disulfide bridge links Cys133 with Cys171. Positions 154–163 are EIF4G-binding; that stretch reads YTLLAMIGEQ. Residues 178–183 and 223–227 contribute to the mRNA site; these read RARQEK and KTLDR.

Belongs to the eukaryotic initiation factor 4E family. In terms of assembly, EIF4F is a multi-subunit complex, the composition of which varies with external and internal environmental conditions. It is composed of at least EIF4A, EIF4E and EIF4G. EIF4E is also known to interact with other partners. In higher plants two isoforms of EIF4F have been identified, named isoform EIF4F and isoform EIF(iso)4F. Isoform EIF4F has subunits p220 and p26, whereas isoform EIF(iso)4F has subunits p82 and p28. (Microbial infection) Interacts with potyvirus viral genome-linked protein (VPg); this interaction is possible in susceptible hosts but impaired in resistant plants. In terms of processing, according to the redox status, the Cys-133-Cys-171 disulfide bridge may have a role in regulating protein function by affecting its ability to bind capped mRNA.

The protein localises to the nucleus. It localises to the cytoplasm. Component of the protein complex eIF4F, which is involved in the recognition of the mRNA cap, ATP-dependent unwinding of 5'-terminal secondary structure and recruitment of mRNA to the ribosome. Recognizes and binds the 7-methylguanosine-containing mRNA cap during an early step in the initiation of protein synthesis and facilitates ribosome binding by inducing the unwinding of the mRNAs secondary structures. Key component of recessive resistance to potyviruses. Its function is as follows. (Microbial infection) Susceptibility host factor required for viral infection by recruiting viral RNAs to the host ribosomal complex via an interaction with viral genome-linked protein (VPg). The protein is Eukaryotic translation initiation factor 4E-1 of Lactuca sativa (Garden lettuce).